Reading from the N-terminus, the 241-residue chain is 1-(5-phosphoribosyl)-5-[(5-phosphoribosylamino)methylideneamino] imidazole-4-carboxamide isomerase (241 aa).

The active-site Proton acceptor is aspartate 8. The active-site Proton donor is aspartate 129.

Belongs to the HisA/HisF family.

Its subcellular location is the cytoplasm. The catalysed reaction is 1-(5-phospho-beta-D-ribosyl)-5-[(5-phospho-beta-D-ribosylamino)methylideneamino]imidazole-4-carboxamide = 5-[(5-phospho-1-deoxy-D-ribulos-1-ylimino)methylamino]-1-(5-phospho-beta-D-ribosyl)imidazole-4-carboxamide. It functions in the pathway amino-acid biosynthesis; L-histidine biosynthesis; L-histidine from 5-phospho-alpha-D-ribose 1-diphosphate: step 4/9. This Novosphingobium aromaticivorans (strain ATCC 700278 / DSM 12444 / CCUG 56034 / CIP 105152 / NBRC 16084 / F199) protein is 1-(5-phosphoribosyl)-5-[(5-phosphoribosylamino)methylideneamino] imidazole-4-carboxamide isomerase.